The following is a 223-amino-acid chain: Ribonuclease 3 (223 aa).

Residues 3–125 (LERLQKKLSY…IIAAIYLDAG (123 aa)) form the RNase III domain. E38 is a Mg(2+) binding site. D42 is a catalytic residue. Mg(2+) contacts are provided by D111 and E114. Residue E114 is part of the active site. The 71-residue stretch at 152-222 (DPKTRLQEFL…AEQVLAKLTT (71 aa)) folds into the DRBM domain.

It belongs to the ribonuclease III family. Homodimer. Mg(2+) is required as a cofactor.

Its subcellular location is the cytoplasm. It carries out the reaction Endonucleolytic cleavage to 5'-phosphomonoester.. Its function is as follows. Digests double-stranded RNA. Involved in the processing of primary rRNA transcript to yield the immediate precursors to the large and small rRNAs (23S and 16S). Processes some mRNAs, and tRNAs when they are encoded in the rRNA operon. Processes pre-crRNA and tracrRNA of type II CRISPR loci if present in the organism. This is Ribonuclease 3 from Actinobacillus pleuropneumoniae serotype 5b (strain L20).